Reading from the N-terminus, the 276-residue chain is NAD kinase (276 aa).

Asp-61 serves as the catalytic Proton acceptor. Residues 61–62, Arg-66, 135–136, Arg-146, His-163, Asp-165, and Ala-200 each bind NAD(+); these read DG and NE.

This sequence belongs to the NAD kinase family. The cofactor is a divalent metal cation.

Its subcellular location is the cytoplasm. It catalyses the reaction NAD(+) + ATP = ADP + NADP(+) + H(+). In terms of biological role, involved in the regulation of the intracellular balance of NAD and NADP, and is a key enzyme in the biosynthesis of NADP. Catalyzes specifically the phosphorylation on 2'-hydroxyl of the adenosine moiety of NAD to yield NADP. In Chloroflexus aurantiacus (strain ATCC 29366 / DSM 635 / J-10-fl), this protein is NAD kinase.